We begin with the raw amino-acid sequence, 195 residues long: Group XIIB secretory phospholipase A2-like protein (195 aa).

The first 19 residues, 1–19, serve as a signal peptide directing secretion; the sequence is MKLLCGFFLLWLGLVGNLA. The Ca(2+) site is built by serine 89, tyrosine 91, leucine 93, and aspartate 116.

Belongs to the phospholipase A2 family. Ca(2+) serves as cofactor.

It is found in the secreted. Not known; does not seem to have catalytic activity. This chain is Group XIIB secretory phospholipase A2-like protein (Pla2g12b), found in Mus musculus (Mouse).